We begin with the raw amino-acid sequence, 383 residues long: Acetylornithine deacetylase (383 aa).

A Zn(2+)-binding site is contributed by His80. Asp82 is an active-site residue. Asp112 lines the Zn(2+) pocket. The active site involves Glu144. The Zn(2+) site is built by Glu145, Glu169, and His355.

This sequence belongs to the peptidase M20A family. ArgE subfamily. In terms of assembly, homodimer. It depends on Zn(2+) as a cofactor. The cofactor is Co(2+). Glutathione is required as a cofactor.

It is found in the cytoplasm. It catalyses the reaction N(2)-acetyl-L-ornithine + H2O = L-ornithine + acetate. It participates in amino-acid biosynthesis; L-arginine biosynthesis; L-ornithine from N(2)-acetyl-L-ornithine (linear): step 1/1. Functionally, catalyzes the hydrolysis of the amide bond of N(2)-acetylated L-amino acids. Cleaves the acetyl group from N-acetyl-L-ornithine to form L-ornithine, an intermediate in L-arginine biosynthesis pathway, and a branchpoint in the synthesis of polyamines. This chain is Acetylornithine deacetylase, found in Escherichia coli O139:H28 (strain E24377A / ETEC).